We begin with the raw amino-acid sequence, 431 residues long: Serine--tRNA ligase (431 aa).

237–239 is an L-serine binding site; that stretch reads TAE. 268 to 270 serves as a coordination point for ATP; the sequence is RSE. Glutamate 291 provides a ligand contact to L-serine. ATP is bound at residue 355 to 358; it reads EISS. Serine 390 lines the L-serine pocket.

It belongs to the class-II aminoacyl-tRNA synthetase family. Type-1 seryl-tRNA synthetase subfamily. As to quaternary structure, homodimer. The tRNA molecule binds across the dimer.

The protein resides in the cytoplasm. It carries out the reaction tRNA(Ser) + L-serine + ATP = L-seryl-tRNA(Ser) + AMP + diphosphate + H(+). The enzyme catalyses tRNA(Sec) + L-serine + ATP = L-seryl-tRNA(Sec) + AMP + diphosphate + H(+). It functions in the pathway aminoacyl-tRNA biosynthesis; selenocysteinyl-tRNA(Sec) biosynthesis; L-seryl-tRNA(Sec) from L-serine and tRNA(Sec): step 1/1. In terms of biological role, catalyzes the attachment of serine to tRNA(Ser). Is also able to aminoacylate tRNA(Sec) with serine, to form the misacylated tRNA L-seryl-tRNA(Sec), which will be further converted into selenocysteinyl-tRNA(Sec). This is Serine--tRNA ligase from Neisseria meningitidis serogroup B (strain ATCC BAA-335 / MC58).